The following is a 307-amino-acid chain: Ornithine carbamoyltransferase (307 aa).

Residues 50–53 (STRT), Gln77, Arg101, and 128–131 (HPCQ) each bind carbamoyl phosphate. Residues Asn160, Asp224, and 228–229 (SM) each bind L-ornithine. Carbamoyl phosphate-binding positions include 264–265 (CL) and Arg292.

It belongs to the aspartate/ornithine carbamoyltransferase superfamily. OTCase family.

It is found in the cytoplasm. It catalyses the reaction carbamoyl phosphate + L-ornithine = L-citrulline + phosphate + H(+). It participates in amino-acid biosynthesis; L-arginine biosynthesis; L-arginine from L-ornithine and carbamoyl phosphate: step 1/3. Its function is as follows. Reversibly catalyzes the transfer of the carbamoyl group from carbamoyl phosphate (CP) to the N(epsilon) atom of ornithine (ORN) to produce L-citrulline. This is Ornithine carbamoyltransferase from Mycolicibacterium gilvum (strain PYR-GCK) (Mycobacterium gilvum (strain PYR-GCK)).